We begin with the raw amino-acid sequence, 67 residues long: DQASMQRASRLLHQCDLRPRDCARRSSERGQGERWRQQLRACDEDSEPRQQCCQNLQRISSQDRCRA.

It belongs to the 2S seed storage albumins family. Heterodimer of a small and a large chain linked by disulfide bonds.

Its subcellular location is the vacuole. The protein localises to the aleurone grain. In terms of biological role, this is a 2S seed storage protein. This is 2S seed storage albumin protein from Matteuccia struthiopteris (European ostrich fern).